The sequence spans 134 residues: QEGDAAKGEKEFNKCKACHMVQAPDGTDIVKGGKTGPNLYGVVGRKIASEEGFKYGDGILEVAEKNPDLVWTEADLIEYVTDPKPWLVEKTGDSAAKTKMTFKLGKNQADVVAFLAQNSPDAGAEAAPAEDAAD.

Residue Gln1 is modified to Pyrrolidone carboxylic acid. Heme c is bound by residues Cys15, Cys18, His19, and Met100.

Binds 1 heme c group covalently per subunit.

Electron donor for nitrous-oxide reductase. This is Cytochrome c-550 from Paracoccus pantotrophus (Thiosphaera pantotropha).